A 238-amino-acid polypeptide reads, in one-letter code: Protein MIS12 homolog (238 aa).

Positions 117–149 (ELDAELDSLRDKLNVVGKRSVELDSELQALERS) form a coiled coil.

The protein belongs to the mis12 family.

It localises to the chromosome. Its subcellular location is the centromere. It is found in the kinetochore. Its function is as follows. Constitutive component of kinetochores that is essential for proper cell division during mitotic cell cycle. May play a role in the modulation of centromere during meiosis. This Arabidopsis thaliana (Mouse-ear cress) protein is Protein MIS12 homolog.